A 362-amino-acid chain; its full sequence is Aminomethyltransferase (362 aa).

It belongs to the GcvT family. In terms of assembly, the glycine cleavage system is composed of four proteins: P, T, L and H.

The catalysed reaction is N(6)-[(R)-S(8)-aminomethyldihydrolipoyl]-L-lysyl-[protein] + (6S)-5,6,7,8-tetrahydrofolate = N(6)-[(R)-dihydrolipoyl]-L-lysyl-[protein] + (6R)-5,10-methylene-5,6,7,8-tetrahydrofolate + NH4(+). In terms of biological role, the glycine cleavage system catalyzes the degradation of glycine. This Listeria monocytogenes serotype 4a (strain HCC23) protein is Aminomethyltransferase.